Consider the following 101-residue polypeptide: Chaperone modulatory protein CbpM (101 aa).

This sequence belongs to the CbpM family.

Its function is as follows. Interacts with CbpA and inhibits both the DnaJ-like co-chaperone activity and the DNA binding activity of CbpA. Together with CbpA, modulates the activity of the DnaK chaperone system. Does not inhibit the co-chaperone activity of DnaJ. This is Chaperone modulatory protein CbpM from Pseudomonas putida (strain W619).